We begin with the raw amino-acid sequence, 156 residues long: CRIB domain-containing protein RIC11 (156 aa).

The 14-residue stretch at 26 to 39 folds into the CRIB domain; that stretch reads IGHPTEVKHVAHIG. The disordered stretch occupies residues 87–156; sequence QDQLNISDRI…SMVSRLNSNA (70 aa). Residues 109-120 are compositionally biased toward basic residues; that stretch reads IHTKSKNRRKKP. The segment covering 121–142 has biased composition (low complexity); it reads SSTSSPRSRPSPKSSRSMGLSK.

In terms of biological role, functions as a downstream effector of Rho-related GTP binding proteins of the 'Rho of Plants' (ROPs) family. Participates in the propagation of ROP GTPase signals in specific cellular responses. The protein is CRIB domain-containing protein RIC11 (RIC11) of Arabidopsis thaliana (Mouse-ear cress).